A 737-amino-acid chain; its full sequence is MISVTDIRRAFLDNECHTITKAFGYLHEDKAIALIKIGFHPTYLPKVLYNNVVEFVPEKLYLFKPRTVAPLDLISTITKLKNVDKFASHINYHKNSILITGDKSLIVKCMPYMIISDDDIRFIREQFVGTNSIEYILSFINKESIYRMSYQFSENEIVTIINRDHFMYEPIYEHQVLDSDFLKTMLDKYGIVPINSGIIDELYPEAIIEILMAVVRPRDAIRFLDIVNKNQLTEDSVKNYIINDIRRGKIDYYIPYVEDFLEDRTEDLGIYANIFFEDAIDITKLDITKTELEHISKYINYYTTYIDHIVNIILQNNYIDILASIIDYVQDVLTEELCIRIVCESTNPVPVTSLPIHSTLVMVMCIQMKYVDIVEFLDEIDIDTLIEKGADPITEYTFTTRWYNKHNDLITLYIKKYGFCPMMMKRLMFEYPLTKEASDHLLKTMDENRGAIMFFPRTICTLPYLLCCNYKLIQKPIPFKEENRNIVYKKTNRVLCFDLLENSAFKSLIKIDSIPGLKTYNMKDITYEKSNNIICVRFIPQESIHNEERRIKLQLFDIARLASYGLYYIPSRYLSSWTPVVNMIEGREYTNPQKIECLVILDLFSEEFIEYQNLGNAVSNKYELEYTISNYQAAINCLMSTLLIYLVLGSIRSISKTENFVLSILNIFYKGLKINELLSEPVSGVCIELDKIKDRASSGDSSFIFLKKNELSKTLSLCEKVCVETILDNNQSFKSSK.

M1 is modified (N-acetylmethionine; by host). C496 and C535 form a disulfide bridge.

It belongs to the orthopoxvirus OPG064 family. Interacts with host KLC2; this interaction promotes IEV trafficking by engaging the host kinesin-1 complex. Interacts with protein OPG056. In terms of processing, N-acetylated on initiator methionine by host.

In terms of biological role, plays a role in intracellular enveloped virus (IEV) transport to the cell surface on microtubules. Together with protein OPG056, forms a complex that interacts with host KLC2 (kinesin light chain isoform 2) to engage the kinesin-1 complex and thereby promote IEV trafficking. The protein is Protein OPG064 (OPG064) of Homo sapiens (Human).